We begin with the raw amino-acid sequence, 416 residues long: Argininosuccinate synthase (416 aa).

ATP contacts are provided by residues 19-27 (AYSGGLDTS) and A46. Y97 and S102 together coordinate L-citrulline. ATP is bound at residue G127. Residues T129, N133, and D134 each coordinate L-aspartate. N133 provides a ligand contact to L-citrulline. Residues R137, S188, S197, E273, and Y285 each contribute to the L-citrulline site.

It belongs to the argininosuccinate synthase family. Type 1 subfamily. Homotetramer.

Its subcellular location is the cytoplasm. The enzyme catalyses L-citrulline + L-aspartate + ATP = 2-(N(omega)-L-arginino)succinate + AMP + diphosphate + H(+). Its pathway is amino-acid biosynthesis; L-arginine biosynthesis; L-arginine from L-ornithine and carbamoyl phosphate: step 2/3. This chain is Argininosuccinate synthase, found in Granulibacter bethesdensis (strain ATCC BAA-1260 / CGDNIH1).